The chain runs to 725 residues: Kelch domain-containing protein SSO1033 (725 aa).

A signal peptide spans 1-28 (MKYGNMKKWAPLILFLFSLLLLQGISLH). Kelch repeat units follow at residues 59–100 (SLYI…VYNN), 101–145 (TIYV…VYNN), 146–199 (AIYV…FNGT), 201–248 (LIIV…YYRG), 250–297 (LFIV…QVGN), and 299–342 (LYLA…VTLG). 4 Fibronectin type-III domains span residues 323–410 (PPLP…TPAS), 411–504 (VPNP…TKAS), 505–583 (VFAF…VVYY), and 585–665 (PPAS…TGDY).

This Saccharolobus solfataricus (strain ATCC 35092 / DSM 1617 / JCM 11322 / P2) (Sulfolobus solfataricus) protein is Kelch domain-containing protein SSO1033.